Reading from the N-terminus, the 60-residue chain is Mastoparan-B (60 aa).

The first 27 residues, 1 to 27 (MKNTILILFTAFIALLGFFGMSAEALA), serve as a signal peptide directing secretion. 4 AXPX repeats span residues 27-30 (ADPL), 31-34 (AEPL), 35-38 (ADPN), and 41-44 (ADPE). A propeptide spanning residues 28 to 45 (DPLAEPLADPNAEADPEA) is cleaved from the precursor. L59 is subject to Leucine amide.

This sequence belongs to the MCD family. Mastoparan subfamily. In terms of tissue distribution, expressed by the venom gland.

It localises to the secreted. The protein resides in the target cell membrane. Functionally, antimicrobial and mast cell degranulating peptide. Has broad spectrum antibacterial activity against both Gram-positive (S.aureus MIC=96-128 ug/ml, S.xylosus MIC=2 ug/ml, S.alactolyticus MIC=32 ug/ml, and S.choleraesuis MIC=32 ug/ml) and Gram-negative bacteria (C.koseri MIC=6 ug/ml, E.coli MIC=3-16 ug/ml, K.pneumoniae MIC=128 ug/ml, P.aerugiosa MIC=128 ug/ml, S.typhimurium MIC=64 ug/ml, V.parahamelytics MIC=32 ug/ml, and S.enterica), as well as on fungi (C.albicans, C.glabrata, and C.neoformans). Does not show antimicrobial activity against S.mutans. Affects membrane permeability of E.coli. Also acts as a mast cell degranulating peptide, that causes liberation of histamine from rat peritoneal mast cells. Its mast cell degranulation activity may be related to the activation of G-protein coupled receptors in mast cells as well as interaction with other proteins located in cell endosomal membranes in the mast cells. Whether this peptide shows hemolytic activities is controversial, as Lin et al., 2011 and Ho et al., 1991 found a hemolytic activity on sheep, chicken and human erythrocytes, whereas Kim et al., 2016 found no hemolytic activity on human erythrocytes. In vivo, induces edema in the rat paw. This Vespa basalis (Hornet) protein is Mastoparan-B.